Here is a 419-residue protein sequence, read N- to C-terminus: Glutamyl-tRNA reductase (419 aa).

Substrate contacts are provided by residues 49–52 (TCNR), Ser-107, 112–114 (EPQ), and Gln-118. Cys-50 serves as the catalytic Nucleophile. Residue 187–192 (GAGETI) participates in NADP(+) binding.

This sequence belongs to the glutamyl-tRNA reductase family. As to quaternary structure, homodimer.

It carries out the reaction (S)-4-amino-5-oxopentanoate + tRNA(Glu) + NADP(+) = L-glutamyl-tRNA(Glu) + NADPH + H(+). Its pathway is porphyrin-containing compound metabolism; protoporphyrin-IX biosynthesis; 5-aminolevulinate from L-glutamyl-tRNA(Glu): step 1/2. Its function is as follows. Catalyzes the NADPH-dependent reduction of glutamyl-tRNA(Glu) to glutamate 1-semialdehyde (GSA). The protein is Glutamyl-tRNA reductase of Psychromonas ingrahamii (strain DSM 17664 / CCUG 51855 / 37).